We begin with the raw amino-acid sequence, 107 residues long: Nucleoid-associated protein GbCGDNIH1_0260 (107 aa).

It belongs to the YbaB/EbfC family. As to quaternary structure, homodimer.

The protein resides in the cytoplasm. Its subcellular location is the nucleoid. Binds to DNA and alters its conformation. May be involved in regulation of gene expression, nucleoid organization and DNA protection. In Granulibacter bethesdensis (strain ATCC BAA-1260 / CGDNIH1), this protein is Nucleoid-associated protein GbCGDNIH1_0260.